Here is a 263-residue protein sequence, read N- to C-terminus: Serine protease ami (263 aa).

The signal sequence occupies residues 1-21 (MNISRVLFAVVLVLTVSTYEC). N2 carries an N-linked (GlcNAc...) asparagine glycan. Residues 22–26 (RPRGR) constitute a propeptide, activation peptide. A Peptidase S1 domain is found at 27-254 (ILGGQDSKEK…YKSWIMETMY (228 aa)). A disulfide bridge connects residues C52 and C68. The Charge relay system role is filled by H67. N-linked (GlcNAc...) asparagine glycans are attached at residues N73, N74, and N108. D115 serves as the catalytic Charge relay system. 3 disulfides stabilise this stretch: C149/C215, C180/C196, and C205/C230. The Charge relay system role is filled by S209. N255 is a glycosylation site (N-linked (GlcNAc...) asparagine).

Belongs to the peptidase S1 family. In the embryo, localizes to paraxial regions at the neurula stage and anterior ventral regions at the tailbud stage. From the late tailbud to tadpole stage, expressed along the forming blood vessels including the anterior cardinal veins, posterior cardinal veins, intersomitic veins, dorsal longitudinal anastomosing vessel, dorsal aorta, pronephric sinus and most prominently around the vascular vitelline network, where expression shows left-right asymmetry in the stage 42 embryo. Localizes to endothelial cells. In adults, shows highest expression in liver with moderate levels of expression in the fat body, lung, gut and vessels. Weakly expressed in adult heart, muscle, testis and ovary.

The protein localises to the secreted. In terms of biological role, probable serine protease. This chain is Serine protease ami, found in Xenopus laevis (African clawed frog).